A 587-amino-acid chain; its full sequence is Glutathione hydrolase proenzyme (587 aa).

Residues 1-28 form the signal peptide; that stretch reads MKRTWNVCLTALLSVLLVAGSVPFHAEA. A propeptide spanning residues 29-35 is cleaved from the precursor; sequence KKPPKSY. Arg-113 serves as a coordination point for L-glutamate. Residue Thr-403 is the Nucleophile of the active site. L-glutamate-binding positions include Thr-421, Glu-423, Glu-442, Asp-445, 464 to 465, and 485 to 486; these read SS and GG.

This sequence belongs to the gamma-glutamyltransferase family. This enzyme consists of two polypeptide chains, which are synthesized in precursor form from a single polypeptide. Post-translationally, cleaved by autocatalysis into a large and small subunit.

It localises to the secreted. The enzyme catalyses an N-terminal (5-L-glutamyl)-[peptide] + an alpha-amino acid = 5-L-glutamyl amino acid + an N-terminal L-alpha-aminoacyl-[peptide]. The catalysed reaction is glutathione + H2O = L-cysteinylglycine + L-glutamate. It catalyses the reaction an S-substituted glutathione + H2O = an S-substituted L-cysteinylglycine + L-glutamate. The protein operates within sulfur metabolism; glutathione metabolism. Inhibited by glucose. Its function is as follows. Cleaves the gamma-glutamyl bond of extracellular glutathione (gamma-Glu-Cys-Gly), glutathione conjugates, and other gamma-glutamyl compounds. The metabolism of glutathione releases free glutamate and the dipeptide cysteinyl-glycine, which is hydrolyzed to cysteine and glycine by dipeptidases. Uses glutamine as a gamma-glutamyl donor and acceptor for gamma-polyglutamic acid synthesis. Dipeptides are better gamma-glutamyl acceptors than free amino acids. This Bacillus subtilis subsp. natto protein is Glutathione hydrolase proenzyme (ggt).